The chain runs to 28 residues: Dermaseptin-6TR (28 aa).

As to expression, expressed by the skin glands.

The protein resides in the secreted. In terms of biological role, has antimicrobial activity. This chain is Dermaseptin-6TR, found in Phyllomedusa trinitatis (Trinidad leaf frog).